A 330-amino-acid polypeptide reads, in one-letter code: AP-1-like transcription factor YAP3 (330 aa).

Residues 114 to 150 form a disordered region; sequence SYSNTNYFSKNNGISPSSRSPSVAHNENVPDDSKAKK. Residues 121 to 138 show a composition bias toward polar residues; the sequence is FSKNNGISPSSRSPSVAH. Ser135 is subject to Phosphoserine. One can recognise a bZIP domain in the interval 144 to 207; that stretch reads DDSKAKKKAQ…TEINAENRLL (64 aa). Residues 147–168 are basic motif; the sequence is KAKKKAQNRAAQKAFRERKEAR. A leucine-zipper region spans residues 172–207; the sequence is LQDKLLESERNRQSLLKEIEELRKANTEINAENRLL.

This sequence belongs to the bZIP family. YAP subfamily. As to quaternary structure, homodimer. Interacts with the C-terminal, cytoplasmic tail of the multidrug resistance ABC transporter PDR5.

It localises to the cytoplasm. It is found in the nucleus. Functionally, transcription activator involved in the regulation of genes expressed in response to environmental changes. When overexpressed it activates transcription of the multidrug resistance ABC transporter PDR5, thus conferring resistance to the fungicide fluconazole (FCZ) and cycloheximide. When overexpressed, it also confers, independent of PDR5, increased resistance to 4-nitroquinoline-N-oxide (4-NQO). Preferentially binds 5'-TTACTAA-3'. This Saccharomyces cerevisiae (strain ATCC 204508 / S288c) (Baker's yeast) protein is AP-1-like transcription factor YAP3 (YAP3).